Reading from the N-terminus, the 314-residue chain is Malate dehydrogenase (314 aa).

Residues G7 to G13 and D34 contribute to the NAD(+) site. Substrate-binding residues include R81 and R87. NAD(+) is bound by residues N94 and I117 to N119. Substrate-binding residues include N119 and R153. H177 functions as the Proton acceptor in the catalytic mechanism. M230 contributes to the NAD(+) binding site.

Belongs to the LDH/MDH superfamily. MDH type 1 family. As to quaternary structure, homodimer.

It catalyses the reaction (S)-malate + NAD(+) = oxaloacetate + NADH + H(+). Functionally, catalyzes the reversible oxidation of malate to oxaloacetate. This Glaesserella parasuis serovar 5 (strain SH0165) (Haemophilus parasuis) protein is Malate dehydrogenase.